The following is a 92-amino-acid chain: UPF0298 protein ABC2380 (92 aa).

This sequence belongs to the UPF0298 family.

It is found in the cytoplasm. This Shouchella clausii (strain KSM-K16) (Alkalihalobacillus clausii) protein is UPF0298 protein ABC2380.